Consider the following 385-residue polypeptide: Transcription factor-like protein DPB (385 aa).

Disordered regions lie at residues Met1 to Ile53 and Asp71 to Arg102. Over residues Pro22–Val31 the composition is skewed to polar residues. Over residues Ser32–Ile53 the composition is skewed to low complexity. Residues Gly101–Pro184 mediate DNA binding. The DEF box motif lies at Asp150–Pro184. The stretch at Arg185 to Ser234 forms a coiled coil. Residues Pro296–Asn385 are disordered. The segment covering Pro300–Thr327 has biased composition (polar residues). Residues His336 to Gln349 show a composition bias toward low complexity. Over residues Glu355–Asp364 the composition is skewed to polar residues.

The protein belongs to the E2F/DP family. Heterodimer with non-phosphorylated E2FC. No interaction with phosphorylated E2FC. Interacts preferentially with E2FC, but also with E2FA and E2FB. Interacts with SKP2A. Targeted for proteasomal degradation by the SCF(SKP2A) E3 ubiquitin ligase complex. In terms of processing, phosphorylated. In terms of tissue distribution, ubiquitous.

It is found in the nucleus. It localises to the cytoplasm. Involved in the regulation of the G1/S transition. Increases the DNA binding activity of E2F proteins after heterodimerization. The complex DPB/E2FC restricts cell division and lateral root initiation and may function as a negative regulator of E2F-regulated genes. The interaction with SKP2A is controlled by auxin. This is Transcription factor-like protein DPB (DPB) from Arabidopsis thaliana (Mouse-ear cress).